Here is a 380-residue protein sequence, read N- to C-terminus: Cytochrome b (380 aa).

A run of 4 helical transmembrane segments spans residues 34–54 (FGSL…LLAM), 78–99 (WLIR…YLHI), 114–134 (WNTG…GYVL), and 179–199 (FFAL…IHLT). Heme b contacts are provided by histidine 84 and histidine 98. The heme b site is built by histidine 183 and histidine 197. Residue histidine 202 coordinates a ubiquinone. The next 4 membrane-spanning stretches (helical) occupy residues 227–247 (LKDI…ALFS), 289–309 (LGGV…PFLH), 321–341 (ISQL…WVGS), and 348–368 (FIII…ILFP).

This sequence belongs to the cytochrome b family. The cytochrome bc1 complex contains 11 subunits: 3 respiratory subunits (MT-CYB, CYC1 and UQCRFS1), 2 core proteins (UQCRC1 and UQCRC2) and 6 low-molecular weight proteins (UQCRH/QCR6, UQCRB/QCR7, UQCRQ/QCR8, UQCR10/QCR9, UQCR11/QCR10 and a cleavage product of UQCRFS1). This cytochrome bc1 complex then forms a dimer. It depends on heme b as a cofactor.

The protein localises to the mitochondrion inner membrane. Functionally, component of the ubiquinol-cytochrome c reductase complex (complex III or cytochrome b-c1 complex) that is part of the mitochondrial respiratory chain. The b-c1 complex mediates electron transfer from ubiquinol to cytochrome c. Contributes to the generation of a proton gradient across the mitochondrial membrane that is then used for ATP synthesis. The sequence is that of Cytochrome b (MT-CYB) from Pelecanoides garnotii (Peruvian diving petrel).